A 478-amino-acid chain; its full sequence is Protein nucleotidyltransferase YdiU (478 aa).

Residues glycine 84, glycine 86, arginine 87, lysine 107, aspartate 119, glycine 120, arginine 170, and arginine 177 each coordinate ATP. The active-site Proton acceptor is the aspartate 246. Mg(2+) contacts are provided by asparagine 247 and aspartate 256. Aspartate 256 is a binding site for ATP.

Belongs to the SELO family. It depends on Mg(2+) as a cofactor. Requires Mn(2+) as cofactor.

It carries out the reaction L-seryl-[protein] + ATP = 3-O-(5'-adenylyl)-L-seryl-[protein] + diphosphate. The enzyme catalyses L-threonyl-[protein] + ATP = 3-O-(5'-adenylyl)-L-threonyl-[protein] + diphosphate. It catalyses the reaction L-tyrosyl-[protein] + ATP = O-(5'-adenylyl)-L-tyrosyl-[protein] + diphosphate. The catalysed reaction is L-histidyl-[protein] + UTP = N(tele)-(5'-uridylyl)-L-histidyl-[protein] + diphosphate. It carries out the reaction L-seryl-[protein] + UTP = O-(5'-uridylyl)-L-seryl-[protein] + diphosphate. The enzyme catalyses L-tyrosyl-[protein] + UTP = O-(5'-uridylyl)-L-tyrosyl-[protein] + diphosphate. In terms of biological role, nucleotidyltransferase involved in the post-translational modification of proteins. It can catalyze the addition of adenosine monophosphate (AMP) or uridine monophosphate (UMP) to a protein, resulting in modifications known as AMPylation and UMPylation. This chain is Protein nucleotidyltransferase YdiU, found in Shigella boydii serotype 4 (strain Sb227).